Reading from the N-terminus, the 164-residue chain is Cytochrome c-type biogenesis protein CcmE (164 aa).

Residues 1-8 (MNPRRQKR) lie on the Cytoplasmic side of the membrane. A helical; Signal-anchor for type II membrane protein membrane pass occupies residues 9–29 (LIVISAIVLVIGAAIGLMLYA). The Periplasmic portion of the chain corresponds to 30–164 (LSQNIDLFYT…QAYSTPKVSG (135 aa)). The heme site is built by His-132 and Tyr-136.

Belongs to the CcmE/CycJ family.

The protein resides in the cell inner membrane. Functionally, heme chaperone required for the biogenesis of c-type cytochromes. Transiently binds heme delivered by CcmC and transfers the heme to apo-cytochromes in a process facilitated by CcmF and CcmH. This is Cytochrome c-type biogenesis protein CcmE from Pseudoalteromonas atlantica (strain T6c / ATCC BAA-1087).